The following is a 277-amino-acid chain: Bifunctional protein FolD (277 aa).

NADP(+) contacts are provided by residues 159–161, serine 184, and isoleucine 225; that span reads GRS.

This sequence belongs to the tetrahydrofolate dehydrogenase/cyclohydrolase family. Homodimer.

It catalyses the reaction (6R)-5,10-methylene-5,6,7,8-tetrahydrofolate + NADP(+) = (6R)-5,10-methenyltetrahydrofolate + NADPH. The enzyme catalyses (6R)-5,10-methenyltetrahydrofolate + H2O = (6R)-10-formyltetrahydrofolate + H(+). It participates in one-carbon metabolism; tetrahydrofolate interconversion. In terms of biological role, catalyzes the oxidation of 5,10-methylenetetrahydrofolate to 5,10-methenyltetrahydrofolate and then the hydrolysis of 5,10-methenyltetrahydrofolate to 10-formyltetrahydrofolate. This chain is Bifunctional protein FolD, found in Acholeplasma laidlawii (strain PG-8A).